Reading from the N-terminus, the 728-residue chain is Catalase-peroxidase 1 (728 aa).

A cross-link (tryptophyl-tyrosyl-methioninium (Trp-Tyr) (with M-244)) is located at residues 91 to 218; it reads WHGAGTYRIA…LAAVQMGLIY (128 aa). Catalysis depends on histidine 92, which acts as the Proton acceptor. Positions 218–244 form a cross-link, tryptophyl-tyrosyl-methioninium (Tyr-Met) (with W-91); that stretch reads YVNPEGPDGKPDPVAAARDIRDTFARM. Histidine 259 lines the heme b pocket.

The protein belongs to the peroxidase family. Peroxidase/catalase subfamily. As to quaternary structure, homodimer or homotetramer. The cofactor is heme b. In terms of processing, formation of the three residue Trp-Tyr-Met cross-link is important for the catalase, but not the peroxidase activity of the enzyme.

It carries out the reaction H2O2 + AH2 = A + 2 H2O. It catalyses the reaction 2 H2O2 = O2 + 2 H2O. Functionally, bifunctional enzyme with both catalase and broad-spectrum peroxidase activity. This chain is Catalase-peroxidase 1, found in Burkholderia vietnamiensis (strain G4 / LMG 22486) (Burkholderia cepacia (strain R1808)).